The chain runs to 115 residues: Large ribosomal subunit protein bL20c (115 aa).

This sequence belongs to the bacterial ribosomal protein bL20 family.

It is found in the plastid. Its subcellular location is the chloroplast. In terms of biological role, binds directly to 23S ribosomal RNA and is necessary for the in vitro assembly process of the 50S ribosomal subunit. It is not involved in the protein synthesizing functions of that subunit. In Chaetosphaeridium globosum (Charophycean green alga), this protein is Large ribosomal subunit protein bL20c.